The sequence spans 498 residues: DNA-directed RNA polymerase subunit Rpo2N (498 aa).

It belongs to the RNA polymerase beta chain family. Part of the RNA polymerase complex.

It is found in the cytoplasm. The enzyme catalyses RNA(n) + a ribonucleoside 5'-triphosphate = RNA(n+1) + diphosphate. DNA-dependent RNA polymerase (RNAP) catalyzes the transcription of DNA into RNA using the four ribonucleoside triphosphates as substrates. The Rpo2 subunit (Rpo2N and Rpo2C in this organism) is implicated in DNA promoter recognition and in nucleotide binding. The polypeptide is DNA-directed RNA polymerase subunit Rpo2N (Methanocaldococcus jannaschii (strain ATCC 43067 / DSM 2661 / JAL-1 / JCM 10045 / NBRC 100440) (Methanococcus jannaschii)).